Reading from the N-terminus, the 226-residue chain is Phosphoribosylformylglycinamidine synthase subunit PurQ (226 aa).

Residues 2–226 (KIAVVVFPGS…LENGRIKVEA (225 aa)) form the Glutamine amidotransferase type-1 domain. C86 acts as the Nucleophile in catalysis. Residues H195 and E197 contribute to the active site.

Part of the FGAM synthase complex composed of 1 PurL, 1 PurQ and 2 PurS subunits.

The protein localises to the cytoplasm. It catalyses the reaction N(2)-formyl-N(1)-(5-phospho-beta-D-ribosyl)glycinamide + L-glutamine + ATP + H2O = 2-formamido-N(1)-(5-O-phospho-beta-D-ribosyl)acetamidine + L-glutamate + ADP + phosphate + H(+). The catalysed reaction is L-glutamine + H2O = L-glutamate + NH4(+). The protein operates within purine metabolism; IMP biosynthesis via de novo pathway; 5-amino-1-(5-phospho-D-ribosyl)imidazole from N(2)-formyl-N(1)-(5-phospho-D-ribosyl)glycinamide: step 1/2. In terms of biological role, part of the phosphoribosylformylglycinamidine synthase complex involved in the purines biosynthetic pathway. Catalyzes the ATP-dependent conversion of formylglycinamide ribonucleotide (FGAR) and glutamine to yield formylglycinamidine ribonucleotide (FGAM) and glutamate. The FGAM synthase complex is composed of three subunits. PurQ produces an ammonia molecule by converting glutamine to glutamate. PurL transfers the ammonia molecule to FGAR to form FGAM in an ATP-dependent manner. PurS interacts with PurQ and PurL and is thought to assist in the transfer of the ammonia molecule from PurQ to PurL. The polypeptide is Phosphoribosylformylglycinamidine synthase subunit PurQ (Limosilactobacillus reuteri (strain DSM 20016) (Lactobacillus reuteri)).